The primary structure comprises 352 residues: Lipopolysaccharide core biosynthesis mannosyltransferase LpcC (352 aa).

It belongs to the glycosyltransferase group 1 family. Glycosyltransferase 4 subfamily.

The protein operates within bacterial outer membrane biogenesis; LPS core biosynthesis. Functionally, acts at transfer of mannose group to a 3-deoxy-D-mono octulonic acid (KDO) via an alpha-1,5 linkage. The protein is Lipopolysaccharide core biosynthesis mannosyltransferase LpcC (lpcC) of Rhizobium leguminosarum bv. viciae.